The primary structure comprises 342 residues: MRNILLKIYDSKFLNQEESYQLFTLISSGKITDIKLASILTAMKIRGESIEEITGAIKAFLDKMKYFPKPDYIFSDIVGTGGDAKNTINISTMSAFVAATCGLKIIKHCNQRISSKSGSSDILEKFNINLNASPEKSRKTLDQLNICFLFAPKYHDGFKYSNNVRTDLKTKTIFNFLGPFLNPATPPLSVIGVYNKNLINIAVNILKNLQYKRAIVLHSDNTDEVTLHGTTYVSELLNKKIISYQLQPESFGLKMHPKKILKINSLEENYHIIKEIMKGKGSKLYEELIAVNVAMLLKVFGYENLKENTKLALNKIRSGDVYKHIRNVANMLKEDNHARHNT.

Residues Gly79, 82–83, Thr87, 89–92, 107–115, and Ser119 each bind 5-phospho-alpha-D-ribose 1-diphosphate; these read GD, NIST, and KHCNQRISS. An anthranilate-binding site is contributed by Gly79. Ser91 contributes to the Mg(2+) binding site. Asn110 lines the anthranilate pocket. Arg165 provides a ligand contact to anthranilate. 2 residues coordinate Mg(2+): Asp223 and Glu224.

It belongs to the anthranilate phosphoribosyltransferase family. In terms of assembly, homodimer. The cofactor is Mg(2+).

It carries out the reaction N-(5-phospho-beta-D-ribosyl)anthranilate + diphosphate = 5-phospho-alpha-D-ribose 1-diphosphate + anthranilate. The protein operates within amino-acid biosynthesis; L-tryptophan biosynthesis; L-tryptophan from chorismate: step 2/5. Catalyzes the transfer of the phosphoribosyl group of 5-phosphorylribose-1-pyrophosphate (PRPP) to anthranilate to yield N-(5'-phosphoribosyl)-anthranilate (PRA). In Buchnera aphidicola subsp. Acyrthosiphon pisum (strain Tuc7), this protein is Anthranilate phosphoribosyltransferase.